The chain runs to 206 residues: Uridine kinase (206 aa).

9 to 16 (GGSGSGKT) is a binding site for ATP.

The protein belongs to the uridine kinase family.

It localises to the cytoplasm. The enzyme catalyses uridine + ATP = UMP + ADP + H(+). The catalysed reaction is cytidine + ATP = CMP + ADP + H(+). It functions in the pathway pyrimidine metabolism; CTP biosynthesis via salvage pathway; CTP from cytidine: step 1/3. It participates in pyrimidine metabolism; UMP biosynthesis via salvage pathway; UMP from uridine: step 1/1. The polypeptide is Uridine kinase (Borrelia hermsii (strain HS1 / DAH)).